The primary structure comprises 41 residues: Photosystem I reaction center subunit IX (41 aa).

The helical transmembrane segment at 7–27 threads the bilayer; sequence YLSTAPVVAFAWITITAGLLI.

The protein belongs to the PsaJ family.

It is found in the plastid. The protein resides in the chloroplast thylakoid membrane. Its function is as follows. May help in the organization of the PsaE and PsaF subunits. This chain is Photosystem I reaction center subunit IX, found in Oedogonium cardiacum (Filamentous green alga).